Consider the following 294-residue polypeptide: tRNA dimethylallyltransferase (294 aa).

10-17 (GPTAVGKT) contributes to the ATP binding site. 12 to 17 (TAVGKT) contacts substrate. The interval 35-38 (DSQQ) is interaction with substrate tRNA.

It belongs to the IPP transferase family. In terms of assembly, monomer. It depends on Mg(2+) as a cofactor.

The catalysed reaction is adenosine(37) in tRNA + dimethylallyl diphosphate = N(6)-dimethylallyladenosine(37) in tRNA + diphosphate. In terms of biological role, catalyzes the transfer of a dimethylallyl group onto the adenine at position 37 in tRNAs that read codons beginning with uridine, leading to the formation of N6-(dimethylallyl)adenosine (i(6)A). The protein is tRNA dimethylallyltransferase of Streptococcus gordonii (strain Challis / ATCC 35105 / BCRC 15272 / CH1 / DL1 / V288).